Here is a 156-residue protein sequence, read N- to C-terminus: uncharacterized protein (156 aa).

Helical transmembrane passes span 42-59, 79-98, and 105-127; these read LLMMTFAIVNLADYMTTV, ASFLLLKIAIVATAFALLLY, and SLGRGIYIGLVAGLAISTAVLGI.

The protein localises to the cell membrane. This is an uncharacterized protein from Archaeoglobus fulgidus (strain ATCC 49558 / DSM 4304 / JCM 9628 / NBRC 100126 / VC-16).